The following is a 238-amino-acid chain: Membrane protein 2 (238 aa).

The protein belongs to the varicellovirus ORF2 protein family. Phosphorylated by host.

The protein resides in the host membrane. The polypeptide is Membrane protein 2 (Varicella-zoster virus (strain Dumas) (HHV-3)).